The primary structure comprises 556 residues: Methyltransferase/ribosomally synthesized type II borosin cyclic peptide precursor pgiMA1 (556 aa).

The methyltransferase domain stretch occupies residues 1 to 250 (MSSASSDSNT…SCSTLYVPPL (250 aa)). Catalysis depends on residues R74, Y78, and Y100. Y100, H102, V105, Q174, G212, S243, and T244 together coordinate S-adenosyl-L-methionine. Residues 251-377 (THANKFSGNM…GAVFGVMKLR (127 aa)) form a clasp domain region. Positions 378-386 (ASEVANEQG) are precursor leader. N-methylaspartate is present on residues D421, D434, D447, D460, D473, D486, D499, D512, D525, and D538. Positions 543–556 (AVPVPDHVAGIPCM) are excised as a propeptide.

The protein in the N-terminal section; belongs to the precorrin methyltransferase family. Homodimer. In terms of processing, pgiMA1 automethylates at Asp-421, Asp-434, Asp-447, Asp-460, Asp-473, Asp-486, Asp-499, Asp-512, Asp-525 and Asp-538 before being processed, probably by the M64 family peptidase found in the genes surrounding PgiMA1, to release methylated peptides which then undergos macrocyclization with the N-terminus of the modified core peptides. Peptide backbone alpha-N-methylations change the physicochemical properties of amide bonds to provide structural constraints and other favorable characteristics including biological membrane permeability to peptides.

It participates in secondary metabolite biosynthesis. Functionally, fusion protein of the methyltransferase pgiM1 and 12 type II borosin core peptides; part of the gene cluster that mediates the biosynthesis of a type II borosin, a highly methylated cyclic peptide with potent biological activities. Type II borosins derive from the C-terminus of the fusion protein, and it is the same protein that methylates its own C-terminus using S-adenosyl methionine (SAM). The C-terminus is subsequently cleaved off and macrocyclized by a prolyloligopeptidase to give the final product. This Phlebiopsis gigantea (strain 11061_1 CR5-6) (White-rot fungus) protein is Methyltransferase/ribosomally synthesized type II borosin cyclic peptide precursor pgiMA1.